Reading from the N-terminus, the 258-residue chain is Acetylglutamate kinase (258 aa).

Residues 44-45, Arg66, and Asn158 each bind substrate; that span reads GG. Residues 181 to 186 and 209 to 211 each bind ATP; these read DVSGIL and IIT.

The protein belongs to the acetylglutamate kinase family. ArgB subfamily. Homodimer.

The protein resides in the cytoplasm. It carries out the reaction N-acetyl-L-glutamate + ATP = N-acetyl-L-glutamyl 5-phosphate + ADP. Its pathway is amino-acid biosynthesis; L-arginine biosynthesis; N(2)-acetyl-L-ornithine from L-glutamate: step 2/4. Its function is as follows. Catalyzes the ATP-dependent phosphorylation of N-acetyl-L-glutamate. In Yersinia pestis bv. Antiqua (strain Antiqua), this protein is Acetylglutamate kinase.